Here is a 1201-residue protein sequence, read N- to C-terminus: DNA-directed RNA polymerase subunit beta' (1201 aa).

Zn(2+)-binding residues include Cys-60, Cys-62, Cys-75, and Cys-78. Positions 449, 451, and 453 each coordinate Mg(2+). Positions 818, 892, 899, and 902 each coordinate Zn(2+).

It belongs to the RNA polymerase beta' chain family. In terms of assembly, the RNAP catalytic core consists of 2 alpha, 1 beta, 1 beta' and 1 omega subunit. When a sigma factor is associated with the core the holoenzyme is formed, which can initiate transcription. Mg(2+) serves as cofactor. It depends on Zn(2+) as a cofactor.

The enzyme catalyses RNA(n) + a ribonucleoside 5'-triphosphate = RNA(n+1) + diphosphate. Its function is as follows. DNA-dependent RNA polymerase catalyzes the transcription of DNA into RNA using the four ribonucleoside triphosphates as substrates. In Listeria monocytogenes serotype 4b (strain F2365), this protein is DNA-directed RNA polymerase subunit beta'.